We begin with the raw amino-acid sequence, 495 residues long: UDP-N-acetylmuramoyl-L-alanyl-D-glutamate--2,6-diaminopimelate ligase (495 aa).

Residues Leu32 and Ser34 each contribute to the UDP-N-acetyl-alpha-D-muramoyl-L-alanyl-D-glutamate site. ATP is bound at residue Gly119–Thr125. Residues Asn160, Thr161–Thr162, Ser188, Gln194, and Arg196 each bind UDP-N-acetyl-alpha-D-muramoyl-L-alanyl-D-glutamate. Position 228 is an N6-carboxylysine (Lys228). Meso-2,6-diaminopimelate is bound by residues Arg390, Asp414 to Arg417, Gly465, and Glu469. The Meso-diaminopimelate recognition motif signature appears at Asp414–Arg417.

The protein belongs to the MurCDEF family. MurE subfamily. It depends on Mg(2+) as a cofactor. In terms of processing, carboxylation is probably crucial for Mg(2+) binding and, consequently, for the gamma-phosphate positioning of ATP.

Its subcellular location is the cytoplasm. The enzyme catalyses UDP-N-acetyl-alpha-D-muramoyl-L-alanyl-D-glutamate + meso-2,6-diaminopimelate + ATP = UDP-N-acetyl-alpha-D-muramoyl-L-alanyl-gamma-D-glutamyl-meso-2,6-diaminopimelate + ADP + phosphate + H(+). It functions in the pathway cell wall biogenesis; peptidoglycan biosynthesis. Catalyzes the addition of meso-diaminopimelic acid to the nucleotide precursor UDP-N-acetylmuramoyl-L-alanyl-D-glutamate (UMAG) in the biosynthesis of bacterial cell-wall peptidoglycan. The sequence is that of UDP-N-acetylmuramoyl-L-alanyl-D-glutamate--2,6-diaminopimelate ligase from Vibrio cholerae serotype O1 (strain ATCC 39315 / El Tor Inaba N16961).